Reading from the N-terminus, the 79-residue chain is ATP synthase subunit c (79 aa).

2 helical membrane-spanning segments follow: residues Ile11–Leu31 and Leu59–Ile79.

The protein belongs to the ATPase C chain family. In terms of assembly, F-type ATPases have 2 components, F(1) - the catalytic core - and F(0) - the membrane proton channel. F(1) has five subunits: alpha(3), beta(3), gamma(1), delta(1), epsilon(1). F(0) has three main subunits: a(1), b(2) and c(10-14). The alpha and beta chains form an alternating ring which encloses part of the gamma chain. F(1) is attached to F(0) by a central stalk formed by the gamma and epsilon chains, while a peripheral stalk is formed by the delta and b chains.

The protein localises to the cell membrane. Its function is as follows. F(1)F(0) ATP synthase produces ATP from ADP in the presence of a proton or sodium gradient. F-type ATPases consist of two structural domains, F(1) containing the extramembraneous catalytic core and F(0) containing the membrane proton channel, linked together by a central stalk and a peripheral stalk. During catalysis, ATP synthesis in the catalytic domain of F(1) is coupled via a rotary mechanism of the central stalk subunits to proton translocation. Functionally, key component of the F(0) channel; it plays a direct role in translocation across the membrane. A homomeric c-ring of between 10-14 subunits forms the central stalk rotor element with the F(1) delta and epsilon subunits. This is ATP synthase subunit c from Buchnera aphidicola subsp. Baizongia pistaciae (strain Bp).